Consider the following 91-residue polypeptide: Elongation factor 1-beta (91 aa).

It belongs to the EF-1-beta/EF-1-delta family.

In terms of biological role, promotes the exchange of GDP for GTP in EF-1-alpha/GDP, thus allowing the regeneration of EF-1-alpha/GTP that could then be used to form the ternary complex EF-1-alpha/GTP/AAtRNA. The polypeptide is Elongation factor 1-beta (Sulfurisphaera tokodaii (strain DSM 16993 / JCM 10545 / NBRC 100140 / 7) (Sulfolobus tokodaii)).